The following is a 331-amino-acid chain: tRNA-cytidine(32) 2-sulfurtransferase (331 aa).

The disordered stretch occupies residues 1-33 (MNAPHMNDTAADAATLDDAAAPAGRPALTRREQ). Low complexity predominate over residues 8–23 (DTAADAATLDDAAAPA). The PP-loop motif signature appears at 71–76 (SGGKDS). [4Fe-4S] cluster-binding residues include Cys146, Cys149, and Cys237.

It belongs to the TtcA family. As to quaternary structure, homodimer. Mg(2+) serves as cofactor. Requires [4Fe-4S] cluster as cofactor.

It localises to the cytoplasm. It catalyses the reaction cytidine(32) in tRNA + S-sulfanyl-L-cysteinyl-[cysteine desulfurase] + AH2 + ATP = 2-thiocytidine(32) in tRNA + L-cysteinyl-[cysteine desulfurase] + A + AMP + diphosphate + H(+). The protein operates within tRNA modification. Catalyzes the ATP-dependent 2-thiolation of cytidine in position 32 of tRNA, to form 2-thiocytidine (s(2)C32). The sulfur atoms are provided by the cysteine/cysteine desulfurase (IscS) system. This chain is tRNA-cytidine(32) 2-sulfurtransferase, found in Burkholderia orbicola (strain MC0-3).